Here is a 177-residue protein sequence, read N- to C-terminus: Large ribosomal subunit protein uL6 (177 aa).

The segment covering 152-171 (RPPEPYKGKGVRYDDEEVRR) has biased composition (basic and acidic residues). The interval 152–177 (RPPEPYKGKGVRYDDEEVRRKEAKKK) is disordered.

Belongs to the universal ribosomal protein uL6 family. In terms of assembly, part of the 50S ribosomal subunit.

In terms of biological role, this protein binds to the 23S rRNA, and is important in its secondary structure. It is located near the subunit interface in the base of the L7/L12 stalk, and near the tRNA binding site of the peptidyltransferase center. The sequence is that of Large ribosomal subunit protein uL6 from Shewanella sp. (strain MR-4).